A 248-amino-acid polypeptide reads, in one-letter code: 3-oxoacyl-[acyl-carrier-protein] reductase FabG (248 aa).

NADP(+)-binding positions include 14 to 17 (GSTR), Thr-39, 65 to 66 (NL), and Asn-92. Ser-144 contacts substrate. The active-site Proton acceptor is Tyr-157. Residues 157–161 (YSTTK) and Ile-190 contribute to the NADP(+) site.

It belongs to the short-chain dehydrogenases/reductases (SDR) family. In terms of assembly, homotetramer.

It catalyses the reaction a (3R)-hydroxyacyl-[ACP] + NADP(+) = a 3-oxoacyl-[ACP] + NADPH + H(+). The protein operates within lipid metabolism; fatty acid biosynthesis. In terms of biological role, catalyzes the NADPH-dependent reduction of beta-ketoacyl-ACP substrates to beta-hydroxyacyl-ACP products, the first reductive step in the elongation cycle of fatty acid biosynthesis. The protein is 3-oxoacyl-[acyl-carrier-protein] reductase FabG (fabG) of Aquifex aeolicus (strain VF5).